The primary structure comprises 359 residues: Flavonoid 8-O-methyltransferase 1 (359 aa).

S-adenosyl-L-methionine is bound at residue Asp-223. Catalysis depends on His-261, which acts as the Proton acceptor.

It belongs to the class I-like SAM-binding methyltransferase superfamily. Cation-independent O-methyltransferase family. Expressed in leaves and trichomes, especially in cv. SD and cv. EMX-1, but barely in cv. MC and cv. SW.

It carries out the reaction an 8-hydroxyflavone + S-adenosyl-L-methionine = an 8-methoxyflavone + S-adenosyl-L-homocysteine + H(+). It catalyses the reaction 4',7,8-trihydroxyflavone + S-adenosyl-L-methionine = 4',7-dihydroxy-8-methoxyflavone + S-adenosyl-L-homocysteine + H(+). The enzyme catalyses 7,8-dihydroxyflavone + S-adenosyl-L-methionine = 7-hydroxy-8-methoxyflavone + S-adenosyl-L-homocysteine + H(+). The catalysed reaction is 3',4',7,8-tetrahydroxyflavone + S-adenosyl-L-methionine = 3',4,7-trihydroxy-8-methoxyflavone + S-adenosyl-L-homocysteine + H(+). It functions in the pathway flavonoid metabolism. With respect to regulation, strongly inhibited by gardenin B (GARD B). Cation-independent flavonoid 8-O-methyltransferase involved in the biosynthesis of polymethoxylated flavonoids natural products such as nevadensin and salvigenin, aroma compounds which contribute to the flavor of sweet basil, and exhibit pharmacological activities such as anti-allergic, anti-oxidant, antibacterial, anti-proliferative, and anti-inflammatory effects. Catalyzes S-adenosylmethionine-dependent regioselective 8-O-methylation of flavonoids; mediates likely the conversion of pilosin (PIL) to nevadensin (NEV) and of 8-hydroxysalvigenin (8-OH-SALV) to gardenin B (GARD B). Can also use 3',4',7,8-tetrahydroxyflavone as substrate. Accepts other unnatural O-diphenols including 7,8,4'-trihydroxy-flavone and 7-O-methyl-8-hydroxy-flavone, and, with a lower efficiency, 7,8-dihydroxy-flavone, as substrates. The sequence is that of Flavonoid 8-O-methyltransferase 1 from Ocimum basilicum (Sweet basil).